A 159-amino-acid chain; its full sequence is MMMDILMYLFETYIHSDAELQVEQDELEEELLRAGFQQKDIYKALVWLEELAALQQSDTSSAISACIASSSTRIYTAKEMQRLDLECRGFLLFLEQINVLTTETREMVIDRVMGLETSEFELEDLKWIILMVLFNVPGNENAYTLMEELLYTKEQGILH.

It belongs to the Smg family.

This Vibrio parahaemolyticus serotype O3:K6 (strain RIMD 2210633) protein is Protein Smg homolog.